Consider the following 401-residue polypeptide: Argininosuccinate synthase (401 aa).

Residues 8–16 (AYSGGLDTS) and A35 contribute to the ATP site. L-citrulline-binding residues include Y86 and S91. Residue G116 participates in ATP binding. Positions 118, 122, and 123 each coordinate L-aspartate. N122 is a binding site for L-citrulline. R126, S175, S184, E260, and Y272 together coordinate L-citrulline.

The protein belongs to the argininosuccinate synthase family. Type 1 subfamily. In terms of assembly, homotetramer.

The protein localises to the cytoplasm. The catalysed reaction is L-citrulline + L-aspartate + ATP = 2-(N(omega)-L-arginino)succinate + AMP + diphosphate + H(+). Its pathway is amino-acid biosynthesis; L-arginine biosynthesis; L-arginine from L-ornithine and carbamoyl phosphate: step 2/3. This is Argininosuccinate synthase from Carboxydothermus hydrogenoformans (strain ATCC BAA-161 / DSM 6008 / Z-2901).